Consider the following 165-residue polypeptide: MAQVTLKGNPVNVDGQLPQKGAQAPAFSLVGGDLADVTLENFAGKRKVLNIFPSVDTPTCATSVRKFNVEAGKLANTVVLCISADLPFAQKRFCGAEGLENVVNLSTLRGREFLENYGVAIASGPLAGLAARAVVVLDEQNKVLHSELVGEIADEPNYAAALAAL.

Positions Pro18–Leu165 constitute a Thioredoxin domain. Cys60 (cysteine sulfenic acid (-SOH) intermediate) is an active-site residue. A disulfide bridge links Cys60 with Cys94.

It belongs to the peroxiredoxin family. Tpx subfamily. In terms of assembly, homodimer.

The catalysed reaction is a hydroperoxide + [thioredoxin]-dithiol = an alcohol + [thioredoxin]-disulfide + H2O. Its function is as follows. Thiol-specific peroxidase that catalyzes the reduction of hydrogen peroxide and organic hydroperoxides to water and alcohols, respectively. Plays a role in cell protection against oxidative stress by detoxifying peroxides. The polypeptide is Thiol peroxidase (Pseudomonas aeruginosa (strain ATCC 15692 / DSM 22644 / CIP 104116 / JCM 14847 / LMG 12228 / 1C / PRS 101 / PAO1)).